A 1529-amino-acid polypeptide reads, in one-letter code: Slit homolog 2 protein (1529 aa).

Residues 1–30 form the signal peptide; the sequence is MRGVGWQMLSLSLGLVLAILNKVAPQACPA. The 25-residue stretch at 31 to 55 folds into the LRRNT domain; it reads QCSCSGSTVDCHGLALRSVPRNIPR. 6 LRR repeats span residues 56–77, 80–101, 104–125, 128–149, 152–173, and 176–197; these read NTERLDLNGNNITRITKTDFAG, HLRVLQLMENKISTIERGAFQD, ELERLRLNRNHLQLFPELLFLG, KLYRLDLSENQIQAIPRKAFRG, DIKNLQLDYNQISCIEDGAFRA, and DLEVLTLNNNNITRLSVASFNH. N-linked (GlcNAc...) asparagine glycosylation is present at Asn-66. The N-linked (GlcNAc...) asparagine glycan is linked to Asn-186. The LRRCT 1 domain occupies 209-259; sequence NNLYCDCHLAWLSDWLRQRPRVGLYTQCMGPSHLRGHNVAEVQKREFVCSG. The 37-residue stretch at 264–300 folds into the LRRNT 2 domain; sequence MAPSCSVLHCPAACTCSNNIVDCRGKGLTEIPTNLPE. Cys-277 and Cys-286 are oxidised to a cystine. LRR repeat units follow at residues 301–322, 325–346, 349–370, 373–394, and 397–418; these read TITEIRLEQNTIKVIPPGAFSP, KLRRIDLSNNQISELAPDAFQG, SLNSLVLYGNKITELPKSLFEG, SLQLLLLNANKINCLRVDAFQD, and NLNLLSLYDNKLQTIAKGTFSP. The 51-residue stretch at 430–480 folds into the LRRCT 2 domain; sequence NPFICDCHLKWLADYLHTNPIETSGARCTSPRRLANKRIGQIKSKKFRCSA. Intrachain disulfides connect Cys-434-Cys-457, Cys-436-Cys-478, Cys-506-Cys-512, and Cys-510-Cys-519. In terms of domain architecture, LRRNT 3 spans 497–533; the sequence is SGDCFADLACPEKCRCEGTTVDCSNQKLNKIPEHIPQ. 5 LRR repeats span residues 534-555, 559-580, 583-604, 607-628, and 631-652; these read YTAELRLNNNEFTVLEATGIFK, QLRKINFSNNKITDIEEGAFEG, GVNEILLTSNRLENVQHKMFKG, SLKTLMLRSNRITCVGNDSFIG, and SVRLLSLYDNQITTVAPGAFDT. A glycan (N-linked (GlcNAc...) asparagine) is linked at Asn-564. Asn-623 carries N-linked (GlcNAc...) asparagine glycosylation. The LRRCT 3 domain occupies 664–714; the sequence is NPFNCNCYLAWLGEWLRKKRIVTGNPRCQKPYFLKEIPIQDVAIQDFTCDD. 4 cysteine pairs are disulfide-bonded: Cys-668–Cys-691, Cys-670–Cys-712, Cys-727–Cys-733, and Cys-731–Cys-740. The LRRNT 4 domain maps to 718–754; that stretch reads DNSCSPLSRCPTECTCLDTVVRCSNKGLKVLPKGIPR. LRR repeat units lie at residues 755-777, 778-799, 802-823, and 826-847; these read DVTELYLDGNQFTLVPKELSNYK, HLTLIDLSNNRISTLSNQSFSN, QLLTLILSYNRLRCIPPRTFDG, and SLRLLSLHGNDISVVPEGAFND. Residues Asn-794 and Asn-799 are each glycosylated (N-linked (GlcNAc...) asparagine). The LRRCT 4 domain maps to 859–909; that stretch reads NPLYCDCNMQWLSDWVKSEYKEPGIARCAGPGEMADKLLLTTPSKKFTCQG. 20 disulfides stabilise this stretch: Cys-863-Cys-886, Cys-865-Cys-907, Cys-922-Cys-933, Cys-927-Cys-943, Cys-945-Cys-954, Cys-961-Cys-972, Cys-966-Cys-984, Cys-986-Cys-995, Cys-1002-Cys-1013, Cys-1007-Cys-1022, Cys-1024-Cys-1033, Cys-1040-Cys-1053, Cys-1047-Cys-1062, Cys-1064-Cys-1073, Cys-1080-Cys-1091, Cys-1085-Cys-1100, Cys-1102-Cys-1111, Cys-1125-Cys-1136, Cys-1130-Cys-1145, and Cys-1147-Cys-1156. EGF-like domains are found at residues 918 to 955 and 957 to 996; these read KCNPCLSNPCKNDGTCNSDPVDFYRCTCPYGFKGQDCD and PIHACISNPCKHGGTCHLKEGEEDGFWCICADGFEGENCE. In terms of domain architecture, EGF-like 3; calcium-binding spans 998 to 1034; the sequence is NVDDCEDNDCENNSTCVDGINNYTCLCPPEYTGELCE. 3 N-linked (GlcNAc...) asparagine glycosylation sites follow: Asn-1009, Asn-1010, and Asn-1019. An EGF-like 4 domain is found at 1036–1074; the sequence is KLDFCAQDLNPCQHDSKCILTPKGFKCDCTPGYVGEHCD. Positions 1076–1112 constitute an EGF-like 5; calcium-binding domain; the sequence is DFDDCQDNKCKNGAHCTDAVNGYTCICPEGYSGLFCE. An EGF-like 6 domain is found at 1121–1157; sequence RTSPCDNFDCQNGAQCIVRINEPICQCLPGYQGEKCE. Residues 1160 to 1333 enclose the Laminin G-like domain; it reads VSVNFINKES…PMQTGILPGC (174 aa). Residues Asn-1183, Asn-1266, and Asn-1300 are each glycosylated (N-linked (GlcNAc...) asparagine). 14 disulfides stabilise this stretch: Cys-1307-Cys-1333, Cys-1336-Cys-1346, Cys-1341-Cys-1356, Cys-1358-Cys-1367, Cys-1375-Cys-1385, Cys-1380-Cys-1395, Cys-1397-Cys-1406, Cys-1416-Cys-1426, Cys-1421-Cys-1436, Cys-1438-Cys-1447, Cys-1453-Cys-1492, Cys-1471-Cys-1506, Cys-1482-Cys-1522, and Cys-1486-Cys-1524. Positions 1332–1368 constitute an EGF-like 7 domain; it reads GCEPCHKKVCAHGTCQPSSQAGFTCECQEGWMGPLCD. A CTCK domain is found at 1453–1528; it reads CRGERIRDYY…VVKCGCTRCV (76 aa).

In terms of assembly, interacts with GREM1. Homodimer. Binds ROBO1 and ROBO2 with high affinity. Fetal lung and kidney, and adult spinal cord. Weak expression in adult adrenal gland, thyroid, trachea and other tissues examined.

It is found in the secreted. Thought to act as molecular guidance cue in cellular migration, and function appears to be mediated by interaction with roundabout homolog receptors. During neural development involved in axonal navigation at the ventral midline of the neural tube and projection of axons to different regions. SLIT1 and SLIT2 seem to be essential for midline guidance in the forebrain by acting as repulsive signal preventing inappropriate midline crossing by axons projecting from the olfactory bulb. In spinal cord development may play a role in guiding commissural axons once they reached the floor plate by modulating the response to netrin. In vitro, silences the attractive effect of NTN1 but not its growth-stimulatory effect and silencing requires the formation of a ROBO1-DCC complex. May be implicated in spinal cord midline post-crossing axon repulsion. In vitro, only commissural axons that crossed the midline responded to SLIT2. In the developing visual system appears to function as repellent for retinal ganglion axons by providing a repulsion that directs these axons along their appropriate paths prior to, and after passage through, the optic chiasm. In vitro, collapses and repels retinal ganglion cell growth cones. Seems to play a role in branching and arborization of CNS sensory axons, and in neuronal cell migration. In vitro, Slit homolog 2 protein N-product, but not Slit homolog 2 protein C-product, repels olfactory bulb (OB) but not dorsal root ganglia (DRG) axons, induces OB growth cones collapse and induces branching of DRG axons. Seems to be involved in regulating leukocyte migration. In Homo sapiens (Human), this protein is Slit homolog 2 protein (SLIT2).